The chain runs to 1279 residues: Myosin-1 (1279 aa).

The span at 1–12 shows a compositional bias: basic residues; that stretch reads MAIVKRGGRTRA. A disordered region spans residues 1–25; it reads MAIVKRGGRTRAKQQQAPAKVNNGL. Positions 48 to 736 constitute a Myosin motor domain; it reads VGVSDLTLLS…TLFALEDMRD (689 aa). Residue 141–148 coordinates ATP; sequence GESGAGKT. Ser371 bears the Phosphoserine mark. Residues 419–502 form an actin-binding region; it reads SIGILDIYGF…PGLFAALNDS (84 aa). IQ domains lie at 740 to 760 and 761 to 786; these read HNMA…KEDA and AKTI…YGNS. The TH1 domain occupies 794 to 984; sequence RRRFSMLGSR…SGTVTVNQGL (191 aa). 2 stretches are compositionally biased toward polar residues: residues 980–989 and 1018–1027; these read VNQGLPPTSK and AFQSQPTASY. Disordered regions lie at residues 980 to 1001, 1014 to 1132, 1189 to 1216, and 1253 to 1279; these read VNQG…LGKV, LAQP…PKHP, SPSA…SSNT, and LADA…DDDW. Low complexity-rich tracts occupy residues 1038–1056 and 1067–1095; these read TQLY…PTRT and STQT…KKIA. The segment covering 1116–1126 has biased composition (pro residues); sequence APPPPPPPPAL. In terms of domain architecture, SH3 spans 1129-1189; that stretch reads PKHPTYRAMY…PIDYLQEESS (61 aa). A compositionally biased stretch (polar residues) spans 1189 to 1209; sequence SPSASAATQSYAPTTASSNPV. Acidic residues predominate over residues 1268–1279; that stretch reads SDAEDDDDDDDW.

It belongs to the TRAFAC class myosin-kinesin ATPase superfamily. Myosin family. In terms of processing, phosphorylation of the TEDS site (Ser-371) is required for the polarization of the actin cytoskeleton. Phosphorylation probably activates the myosin-I ATPase activity.

The protein resides in the cytoplasm. The protein localises to the cytoskeleton. Its subcellular location is the actin patch. Its function is as follows. Type-I myosin implicated in the organization of the actin cytoskeleton. Required for proper actin cytoskeleton polarization. At the cell cortex, assembles in patch-like structures together with proteins from the actin-polymerizing machinery and promotes actin assembly. Functions as actin nucleation-promoting factor (NPF) for the Arp2/3 complex. The chain is Myosin-1 (MYO1) from Lodderomyces elongisporus (strain ATCC 11503 / CBS 2605 / JCM 1781 / NBRC 1676 / NRRL YB-4239) (Yeast).